The sequence spans 170 residues: RNA pyrophosphohydrolase (170 aa).

A Nudix hydrolase domain is found at 6-149; it reads GFRPNVGIVI…KRDVYRRALK (144 aa). A Nudix box motif is present at residues 38–59; it reads GGIDDGETPEQAMYRELYEEVG.

The protein belongs to the Nudix hydrolase family. RppH subfamily. A divalent metal cation is required as a cofactor.

Accelerates the degradation of transcripts by removing pyrophosphate from the 5'-end of triphosphorylated RNA, leading to a more labile monophosphorylated state that can stimulate subsequent ribonuclease cleavage. The chain is RNA pyrophosphohydrolase from Aliivibrio salmonicida (strain LFI1238) (Vibrio salmonicida (strain LFI1238)).